A 483-amino-acid chain; its full sequence is Shaker-related potassium channel tsha2 (483 aa).

Residues 1–165 are Cytoplasmic-facing; sequence MTVVSCEIQD…YPESSGPARM (165 aa). Residues 166–186 form a helical membrane-spanning segment; that stretch reads IAVVSVSVIVISIVIFCLETL. At 187–220 the chain is on the extracellular side; sequence PQFREDTSANLPLSNHHTTNGTTLHKKPNLFTDP. A helical transmembrane segment spans residues 221–241; the sequence is FFMVETLCIVWFSFEFLVRFL. Topologically, residues 242-252 are cytoplasmic; sequence SCPSKPAFFKN. A lipid anchor (S-palmitoyl cysteine) is attached at cysteine 243. Residues 253–273 traverse the membrane as a helical segment; sequence AMNSIDILAIAPYFITLGLEL. Residues 274-324 lie on the Extracellular side of the membrane; it reads AEQQEAGSEQAMSLAILRVIRLVRVFRIFKLSRHSKGLQILGQTLHASISE. A helical; Voltage-sensor transmembrane segment spans residues 325-345; the sequence is LGLLIFFLLIGVILFSSAVYF. Over 346-353 the chain is Cytoplasmic; sequence AEADDPES. The chain crosses the membrane as a helical span at residues 354-374; it reads GFSSIPAAFWWAVVSMTTVGY. The Selectivity filter signature appears at 371-376; it reads TVGYGD. Over 375–385 the chain is Extracellular; sequence GDMCPVTIGGK. Residues 386 to 406 form a helical membrane-spanning segment; sequence IVGSMCAIAGVLTIALPVPVI. Residues 407–483 lie on the Cytoplasmic side of the membrane; the sequence is VSNFNYFYHR…EHYTGKLTDV (77 aa). Tyrosine 426 is modified (phosphotyrosine). A Phosphothreonine modification is found at threonine 430. Over residues 440–452 the composition is skewed to polar residues; it reads EFKSTSDSRQSLT. The segment at 440–459 is disordered; the sequence is EFKSTSDSRQSLTKSEDTEE. The PDZ-binding signature appears at 481–483; the sequence is TDV.

The protein belongs to the potassium channel family. A (Shaker) (TC 1.A.1.2) subfamily. Heterotetramer of potassium channel proteins. Binds PDZ domains of dlg1, dlg2 and dlg4. Expressed in oligodendrocytes and astrocytes.

The protein localises to the membrane. In terms of biological role, mediates the voltage-dependent potassium ion permeability of excitable membranes. Assuming opened or closed conformations in response to the voltage difference across the membrane, the protein forms a potassium-selective channel through which potassium ions may pass in accordance with their electrochemical gradient. The polypeptide is Shaker-related potassium channel tsha2 (Oncorhynchus mykiss (Rainbow trout)).